The following is a 354-amino-acid chain: Methionine import ATP-binding protein MetN (354 aa).

Positions 8–250 constitute an ABC transporter domain; it reads LDHIDITFRQ…PKEALTQEFI (243 aa). 42-49 contributes to the ATP binding site; it reads GYSGAGKS.

This sequence belongs to the ABC transporter superfamily. Methionine importer (TC 3.A.1.24) family. The complex is composed of two ATP-binding proteins (MetN), two transmembrane proteins (MetI) and a solute-binding protein (MetQ).

It is found in the cell membrane. It catalyses the reaction L-methionine(out) + ATP + H2O = L-methionine(in) + ADP + phosphate + H(+). It carries out the reaction D-methionine(out) + ATP + H2O = D-methionine(in) + ADP + phosphate + H(+). Its function is as follows. Part of the ABC transporter complex MetNIQ involved in methionine import. Responsible for energy coupling to the transport system. The sequence is that of Methionine import ATP-binding protein MetN from Streptococcus pyogenes serotype M12 (strain MGAS2096).